A 241-amino-acid chain; its full sequence is Methylthioribulose-1-phosphate dehydratase (241 aa).

The disordered stretch occupies residues 1–20 (MSAIKDERNNDHLVQSHDPE). C100 is a binding site for substrate. The Zn(2+) site is built by H117 and H119. Catalysis depends on E146, which acts as the Proton donor/acceptor. Residue H202 participates in Zn(2+) binding.

The protein belongs to the aldolase class II family. MtnB subfamily. Requires Zn(2+) as cofactor.

It localises to the cytoplasm. It catalyses the reaction 5-(methylsulfanyl)-D-ribulose 1-phosphate = 5-methylsulfanyl-2,3-dioxopentyl phosphate + H2O. It functions in the pathway amino-acid biosynthesis; L-methionine biosynthesis via salvage pathway; L-methionine from S-methyl-5-thio-alpha-D-ribose 1-phosphate: step 2/6. Functionally, catalyzes the dehydration of methylthioribulose-1-phosphate (MTRu-1-P) into 2,3-diketo-5-methylthiopentyl-1-phosphate (DK-MTP-1-P). This Blastomyces gilchristii (strain SLH14081) (Blastomyces dermatitidis) protein is Methylthioribulose-1-phosphate dehydratase.